We begin with the raw amino-acid sequence, 617 residues long: Dihydroxy-acid dehydratase (617 aa).

Asp-81 is a binding site for Mg(2+). Cys-122 contributes to the [2Fe-2S] cluster binding site. The Mg(2+) site is built by Asp-123 and Lys-124. Lys-124 is modified (N6-carboxylysine). Cys-197 is a binding site for [2Fe-2S] cluster. Glu-494 is a binding site for Mg(2+). Catalysis depends on Ser-520, which acts as the Proton acceptor.

It belongs to the IlvD/Edd family. As to quaternary structure, homodimer. [2Fe-2S] cluster serves as cofactor. It depends on Mg(2+) as a cofactor.

The catalysed reaction is (2R)-2,3-dihydroxy-3-methylbutanoate = 3-methyl-2-oxobutanoate + H2O. It carries out the reaction (2R,3R)-2,3-dihydroxy-3-methylpentanoate = (S)-3-methyl-2-oxopentanoate + H2O. The protein operates within amino-acid biosynthesis; L-isoleucine biosynthesis; L-isoleucine from 2-oxobutanoate: step 3/4. It functions in the pathway amino-acid biosynthesis; L-valine biosynthesis; L-valine from pyruvate: step 3/4. Its function is as follows. Functions in the biosynthesis of branched-chain amino acids. Catalyzes the dehydration of (2R,3R)-2,3-dihydroxy-3-methylpentanoate (2,3-dihydroxy-3-methylvalerate) into 2-oxo-3-methylpentanoate (2-oxo-3-methylvalerate) and of (2R)-2,3-dihydroxy-3-methylbutanoate (2,3-dihydroxyisovalerate) into 2-oxo-3-methylbutanoate (2-oxoisovalerate), the penultimate precursor to L-isoleucine and L-valine, respectively. The polypeptide is Dihydroxy-acid dehydratase (Parafrankia sp. (strain EAN1pec)).